Here is a 911-residue protein sequence, read N- to C-terminus: DNA polymerase I (911 aa).

In terms of domain architecture, 5'-3' exonuclease spans 186 to 280; it reads VTPAQYPDLA…DTLRLQPWDR (95 aa). In terms of domain architecture, 3'-5' exonuclease spans 320–497; the sequence is RGGLLESGTV…LAAALDAELD (178 aa).

This sequence belongs to the DNA polymerase type-A family. In terms of assembly, single-chain monomer with multiple functions.

It catalyses the reaction DNA(n) + a 2'-deoxyribonucleoside 5'-triphosphate = DNA(n+1) + diphosphate. Its function is as follows. In addition to polymerase activity, this DNA polymerase exhibits 3'-5' and 5'-3' exonuclease activity. This is DNA polymerase I (polA) from Mycobacterium leprae (strain TN).